We begin with the raw amino-acid sequence, 83 residues long: Neurotoxin LmNaTx34.5 (83 aa).

An N-terminal signal peptide occupies residues 1–15 (FILVVIALMVIEVKS). The 67-residue stretch at 16–82 (DGYLMVRAGR…IWTYEKNTCS (67 aa)) folds into the LCN-type CS-alpha/beta domain. 4 disulfides stabilise this stretch: Cys-29–Cys-81, Cys-33–Cys-54, Cys-40–Cys-61, and Cys-44–Cys-63.

It belongs to the long (4 C-C) scorpion toxin superfamily. Sodium channel inhibitor family. Beta subfamily. Expressed by the venom gland.

It is found in the secreted. In terms of biological role, binds voltage-independently at site-4 of sodium channels (Nav) and shift the voltage of activation toward more negative potentials thereby affecting sodium channel activation and promoting spontaneous and repetitive firing. This Lychas mucronatus (Chinese swimming scorpion) protein is Neurotoxin LmNaTx34.5.